We begin with the raw amino-acid sequence, 253 residues long: Fatty acid elongase 5 (253 aa).

The next 7 helical transmembrane spans lie at 24–44 (IFVS…LVII), 60–80 (IMMI…ISLA), 100–120 (FWIF…VLMI), 127–147 (QLSF…GLLL), 150–170 (GIGN…HFLM), 188–208 (ILTK…SLAP), and 214–234 (FALQ…ILFL). A HxxHH motif motif is present at residues 132–136 (HIYHH). The Nucleophile role is filled by His135.

It belongs to the ELO family.

It is found in the membrane. It catalyses the reaction an acyl-CoA + malonyl-CoA + H(+) = a 3-oxoacyl-CoA + CO2 + CoA. Its pathway is lipid metabolism; polyunsaturated fatty acid biosynthesis. Its function is as follows. Involved in the synthesis of fatty acids. Elongates C20 polyunsaturated fatty acids (PUFAs) with a preference for n-6 PUFAs. In Trypanosoma cruzi (strain CL Brener), this protein is Fatty acid elongase 5.